The primary structure comprises 884 residues: Androgen receptor (884 aa).

Residues 1–522 are modulating; that stretch reads MEVQLGLGRV…PIDYYFPPQK (522 aa). The interval 1–551 is interaction with ZNF318; it reads MEVQLGLGRV…GSCKVFFKRA (551 aa). 2 disordered regions span residues 33–145 and 174–207; these read VIQN…TLSL and QQQQ…YLGG. Low complexity-rich tracts occupy residues 55-79 and 174-196; these read QQQQ…PQAQ and QQQQ…AAGA. Serine 61 bears the Phosphoserine; by CDK9 mark. Serine 75 carries the phosphoserine modification. Positions 197–207 are enriched in polar residues; the sequence is PTSSKDSYLGG. Tyrosine 204 carries the phosphotyrosine; by CSK modification. The residue at position 237 (serine 237) is a Phosphoserine. Tyrosine 248 carries the phosphotyrosine; by CSK and TNK2 modification. The disordered stretch occupies residues 275 to 294; it reads DDSADKGTEEPAEYTPFKGS. Tyrosine 288, tyrosine 327, tyrosine 338, and tyrosine 343 each carry phosphotyrosine; by CSK. Phosphotyrosine; by CSK and TNK2 is present on tyrosine 344. Residue lysine 367 forms a Glycyl lysine isopeptide (Lys-Gly) (interchain with G-Cter in SUMO) linkage. At tyrosine 374 the chain carries Phosphotyrosine; by CSK. A Glycyl lysine isopeptide (Lys-Gly) (interchain with G-Cter in SUMO) cross-link involves residue lysine 485. 2 positions are modified to phosphotyrosine; by CSK: tyrosine 499 and tyrosine 516. The interaction with LPXN stretch occupies residues 516 to 883; the sequence is YYFPPQKTCL…GKVKPIYFHT (368 aa). Positions 523–596 form a DNA-binding region, nuclear receptor; sequence TCLICGDEAS…AGMTLGARKL (74 aa). 2 consecutive NR C4-type zinc fingers follow at residues 524-544 and 560-584; these read CLIC…CGSC and CASR…LRKC. The interaction with HIPK3 stretch occupies residues 536-626; the sequence is YGALTCGSCK…TEESSQKLTV (91 aa). The segment at 556-883 is interaction with CCAR1; sequence QKYLCASRND…GKVKPIYFHT (328 aa). Residues 589–883 form an interaction with KAT7 region; the sequence is MTLGARKLKK…GKVKPIYFHT (295 aa). Serine 615 is subject to Phosphoserine; by STK4/MST1. The region spanning 633-864 is the NR LBD domain; that stretch reads ECQPIFLNVL…DFPEMMAEII (232 aa). Positions 670 and 717 each coordinate 17beta-hydroxy-5alpha-androstan-3-one. Residues lysine 810 and lysine 812 each participate in a glycyl lysine isopeptide (Lys-Gly) (interchain with G-Cter in ubiquitin) cross-link. 17beta-hydroxy-5alpha-androstan-3-one is bound at residue threonine 842. Tyrosine 880 carries the post-translational modification Phosphotyrosine; by CSK.

This sequence belongs to the nuclear hormone receptor family. NR3 subfamily. As to quaternary structure, binds DNA as a homodimer. Part of a ternary complex containing AR, EFCAB6/DJBP and PARK7. Interacts with HIPK3 and NR0B2 in the presence of androgen. The ligand binding domain interacts with KAT7/HBO1 in the presence of dihydrotestosterone. Interacts with EFCAB6/DJBP, PQBP1, RANBP9, RBAK, SPDEF, SRA1, TGFB1I1 and RREB1. Interacts with ZMIZ1/ZIMP10 and ZMIZ2/ZMIP7 which both enhance its transactivation activity. Interacts with SLC30A9 and RAD54L2/ARIP4. Interacts with MACROD1 (via macro domain). Interacts via the ligand-binding domain with LXXLL and FXXLF motifs from NCOA1, NCOA2, NCOA3 and MAGEA11. Interacts (via nuclear receptor DNA binding domain and nuclear receptor ligand binding domain) with NCOA4. The AR N-terminal poly-Gln region binds Ran resulting in enhancement of AR-mediated transactivation. Ran-binding decreases as the poly-Gln length increases. Interacts with HIP1 (via coiled coil domain). Interacts (via ligand-binding domain) with TRIM68. Interacts with TNK2. Interacts with USP26. Interacts with RNF6. Interacts (regulated by RNF6 probably through polyubiquitination) with RNF14; regulates AR transcriptional activity. Interacts with PRMT2 and TRIM24. Interacts with RACK1. Interacts with RANBP10; this interaction enhances dihydrotestosterone-induced AR transcriptional activity. Interacts with PRPF6 in a hormone-independent way; this interaction enhances dihydrotestosterone-induced AR transcriptional activity. Interacts with STK4/MST1. Interacts with ZIPK/DAPK3. Interacts with LPXN. Interacts with MAK. Part of a complex containing AR, MAK and NCOA3. Interacts with CRY1. Interacts with CCAR1 and GATA2. Interacts with ZNF318. Interacts with BUD31. Interacts with ARID4A. Interacts with ARID4B. Interacts (via NR LBD domain) with ZBTB7A; the interaction is direct and androgen-dependent. Interacts with NCOR1. Interacts with NCOR2. Interacts with CRY2 in a ligand-dependent manner. Post-translationally, phosphorylated in prostate cancer cells in response to several growth factors including EGF. Phosphorylation is induced by c-Src kinase (CSK). Tyr-499 is one of the major phosphorylation sites and an increase in phosphorylation and Src kinase activity is associated with prostate cancer progression. Phosphorylation by TNK2 enhances the DNA-binding and transcriptional activity. Phosphorylation at Ser-61 by CDK9 regulates AR promoter selectivity and cell growth. Sumoylated on Lys-367 (major) and Lys-485. Ubiquitinated. Deubiquitinated by USP26. 'Lys-6' and 'Lys-27'-linked polyubiquitination by RNF6 modulates AR transcriptional activity and specificity. In terms of processing, palmitoylated by ZDHHC7 and ZDHHC21. Palmitoylation is required for plasma membrane targeting and for rapid intracellular signaling via ERK and AKT kinases and cAMP generation.

It localises to the nucleus. The protein localises to the cytoplasm. Steroid hormone receptors are ligand-activated transcription factors that regulate eukaryotic gene expression and affect cellular proliferation and differentiation in target tissues. Transcription factor activity is modulated by bound coactivator and corepressor proteins like ZBTB7A that recruits NCOR1 and NCOR2 to the androgen response elements/ARE on target genes, negatively regulating androgen receptor signaling and androgen-induced cell proliferation. Transcription activation is also down-regulated by NR0B2. Activated, but not phosphorylated, by HIPK3 and ZIPK/DAPK3. The protein is Androgen receptor (AR) of Eulemur fulvus collaris (Collared brown lemur).